The chain runs to 101 residues: Phosphoribosyl-AMP cyclohydrolase (101 aa).

D71 is a Mg(2+) binding site. C72 serves as a coordination point for Zn(2+). Positions 73 and 75 each coordinate Mg(2+). Zn(2+) contacts are provided by C88 and C95.

This sequence belongs to the PRA-CH family. Homodimer. The cofactor is Mg(2+). Zn(2+) is required as a cofactor.

It is found in the cytoplasm. The catalysed reaction is 1-(5-phospho-beta-D-ribosyl)-5'-AMP + H2O = 1-(5-phospho-beta-D-ribosyl)-5-[(5-phospho-beta-D-ribosylamino)methylideneamino]imidazole-4-carboxamide. It functions in the pathway amino-acid biosynthesis; L-histidine biosynthesis; L-histidine from 5-phospho-alpha-D-ribose 1-diphosphate: step 3/9. Functionally, catalyzes the hydrolysis of the adenine ring of phosphoribosyl-AMP. The protein is Phosphoribosyl-AMP cyclohydrolase of Bacillus cereus (strain AH187).